The primary structure comprises 122 residues: Large ribosomal subunit protein uL14 (122 aa).

The protein belongs to the universal ribosomal protein uL14 family. As to quaternary structure, part of the 50S ribosomal subunit. Forms a cluster with proteins L3 and L19. In the 70S ribosome, L14 and L19 interact and together make contacts with the 16S rRNA in bridges B5 and B8.

Functionally, binds to 23S rRNA. Forms part of two intersubunit bridges in the 70S ribosome. The chain is Large ribosomal subunit protein uL14 from Paraburkholderia phymatum (strain DSM 17167 / CIP 108236 / LMG 21445 / STM815) (Burkholderia phymatum).